Consider the following 730-residue polypeptide: Elongation factor 2 (730 aa).

Positions 19–229 (LMIRNIGIVA…GVSFSEVFNY (211 aa)) constitute a tr-type G domain. GTP is bound by residues 28-35 (AHIDHGKT), 94-98 (DTPGH), and 148-151 (NKVD). His596 carries the post-translational modification Diphthamide.

It belongs to the TRAFAC class translation factor GTPase superfamily. Classic translation factor GTPase family. EF-G/EF-2 subfamily.

The protein localises to the cytoplasm. In terms of biological role, catalyzes the GTP-dependent ribosomal translocation step during translation elongation. During this step, the ribosome changes from the pre-translocational (PRE) to the post-translocational (POST) state as the newly formed A-site-bound peptidyl-tRNA and P-site-bound deacylated tRNA move to the P and E sites, respectively. Catalyzes the coordinated movement of the two tRNA molecules, the mRNA and conformational changes in the ribosome. The protein is Elongation factor 2 (fusA) of Methanococcoides burtonii (strain DSM 6242 / NBRC 107633 / OCM 468 / ACE-M).